The primary structure comprises 485 residues: Serine hydroxymethyltransferase, mitochondrial (485 aa).

Lysine 259 is subject to N6-(pyridoxal phosphate)lysine.

It belongs to the SHMT family. In terms of assembly, homotetramer. The cofactor is pyridoxal 5'-phosphate.

Its subcellular location is the mitochondrion. The enzyme catalyses (6R)-5,10-methylene-5,6,7,8-tetrahydrofolate + glycine + H2O = (6S)-5,6,7,8-tetrahydrofolate + L-serine. The protein operates within one-carbon metabolism; tetrahydrofolate interconversion. Interconversion of serine and glycine. This Candida glabrata (strain ATCC 2001 / BCRC 20586 / JCM 3761 / NBRC 0622 / NRRL Y-65 / CBS 138) (Yeast) protein is Serine hydroxymethyltransferase, mitochondrial (SHM1).